The primary structure comprises 161 residues: Nucleotide-binding protein Bphyt_3208 (161 aa).

The protein belongs to the YajQ family.

Functionally, nucleotide-binding protein. In Paraburkholderia phytofirmans (strain DSM 17436 / LMG 22146 / PsJN) (Burkholderia phytofirmans), this protein is Nucleotide-binding protein Bphyt_3208.